A 269-amino-acid polypeptide reads, in one-letter code: Putative 6-phosphogluconolactonase (269 aa).

Positions 248-269 (DAATGVPDRDSSDSDSPPPFDG) are disordered.

The protein belongs to the glucosamine/galactosamine-6-phosphate isomerase family. 6-phosphogluconolactonase subfamily.

The protein resides in the nucleus. The enzyme catalyses 6-phospho-D-glucono-1,5-lactone + H2O = 6-phospho-D-gluconate + H(+). It participates in carbohydrate degradation; pentose phosphate pathway; D-ribulose 5-phosphate from D-glucose 6-phosphate (oxidative stage): step 2/3. Hydrolysis of 6-phosphogluconolactone to 6-phosphogluconate. In Caenorhabditis elegans, this protein is Putative 6-phosphogluconolactonase.